Reading from the N-terminus, the 471-residue chain is Glutamate--tRNA ligase (471 aa).

The 'HIGH' region motif lies at 9–19 (PSPTGYLHVGG). Positions 98, 100, 125, and 127 each coordinate Zn(2+). The short motif at 237–241 (KLSKR) is the 'KMSKS' region element. Lys240 serves as a coordination point for ATP.

This sequence belongs to the class-I aminoacyl-tRNA synthetase family. Glutamate--tRNA ligase type 1 subfamily. Monomer. Zn(2+) is required as a cofactor.

The protein resides in the cytoplasm. It catalyses the reaction tRNA(Glu) + L-glutamate + ATP = L-glutamyl-tRNA(Glu) + AMP + diphosphate. In terms of biological role, catalyzes the attachment of glutamate to tRNA(Glu) in a two-step reaction: glutamate is first activated by ATP to form Glu-AMP and then transferred to the acceptor end of tRNA(Glu). The polypeptide is Glutamate--tRNA ligase (Shigella dysenteriae serotype 1 (strain Sd197)).